A 132-amino-acid polypeptide reads, in one-letter code: Transcriptional repressor SmtB homolog (132 aa).

Zn(2+) contacts are provided by Cys20, His26, Cys71, Cys73, Asp114, His116, His127, and Glu130. Residues 38–132 (MSLDQAQQMA…EVADHLQESD (95 aa)) form the HTH arsR-type domain. The H-T-H motif DNA-binding region spans 72 to 91 (VCDLAAAMKVSESAVSHQLR).

In terms of assembly, homodimer.

Transcriptional repressor of the expression of the ziaA gene. Controls zinc homeostasis by triggering ZiaA-mediated efflux of excess zinc into the periplasm. The polypeptide is Transcriptional repressor SmtB homolog (ziaR) (Synechocystis sp. (strain ATCC 27184 / PCC 6803 / Kazusa)).